The primary structure comprises 335 residues: Tetraacyldisaccharide 4'-kinase (335 aa).

Position 51–58 (51–58 (HVGGAGKT)) interacts with ATP.

It belongs to the LpxK family.

It catalyses the reaction a lipid A disaccharide + ATP = a lipid IVA + ADP + H(+). Its pathway is glycolipid biosynthesis; lipid IV(A) biosynthesis; lipid IV(A) from (3R)-3-hydroxytetradecanoyl-[acyl-carrier-protein] and UDP-N-acetyl-alpha-D-glucosamine: step 6/6. In terms of biological role, transfers the gamma-phosphate of ATP to the 4'-position of a tetraacyldisaccharide 1-phosphate intermediate (termed DS-1-P) to form tetraacyldisaccharide 1,4'-bis-phosphate (lipid IVA). In Bradyrhizobium sp. (strain ORS 278), this protein is Tetraacyldisaccharide 4'-kinase.